We begin with the raw amino-acid sequence, 640 residues long: Threonine--tRNA ligase (640 aa).

In terms of domain architecture, TGS spans 1–61 (MPTITLPDGS…DSDATLQIIT (61 aa)). The catalytic stretch occupies residues 242-533 (DHRKIGKRLG…LIEHYEGAFP (292 aa)). The Zn(2+) site is built by Cys-333, His-384, and His-510.

This sequence belongs to the class-II aminoacyl-tRNA synthetase family. Homodimer. The cofactor is Zn(2+).

The protein localises to the cytoplasm. The enzyme catalyses tRNA(Thr) + L-threonine + ATP = L-threonyl-tRNA(Thr) + AMP + diphosphate + H(+). In terms of biological role, catalyzes the attachment of threonine to tRNA(Thr) in a two-step reaction: L-threonine is first activated by ATP to form Thr-AMP and then transferred to the acceptor end of tRNA(Thr). Also edits incorrectly charged L-seryl-tRNA(Thr). The chain is Threonine--tRNA ligase from Pseudomonas fluorescens (strain Pf0-1).